We begin with the raw amino-acid sequence, 246 residues long: Bis(5'-nucleosyl)-tetraphosphatase PrpE [asymmetrical] (246 aa).

The protein belongs to the PrpE family. Ni(2+) serves as cofactor.

It catalyses the reaction P(1),P(4)-bis(5'-guanosyl) tetraphosphate + H2O = GMP + GTP + 2 H(+). Asymmetrically hydrolyzes Ap4p to yield AMP and ATP. This chain is Bis(5'-nucleosyl)-tetraphosphatase PrpE [asymmetrical], found in Bacillus cereus (strain AH187).